The following is a 949-amino-acid chain: Glycine dehydrogenase (decarboxylating) (949 aa).

N6-(pyridoxal phosphate)lysine is present on Lys-702.

This sequence belongs to the GcvP family. The glycine cleavage system is composed of four proteins: P, T, L and H. Requires pyridoxal 5'-phosphate as cofactor.

It catalyses the reaction N(6)-[(R)-lipoyl]-L-lysyl-[glycine-cleavage complex H protein] + glycine + H(+) = N(6)-[(R)-S(8)-aminomethyldihydrolipoyl]-L-lysyl-[glycine-cleavage complex H protein] + CO2. In terms of biological role, the glycine cleavage system catalyzes the degradation of glycine. The P protein binds the alpha-amino group of glycine through its pyridoxal phosphate cofactor; CO(2) is released and the remaining methylamine moiety is then transferred to the lipoamide cofactor of the H protein. This Rhodococcoides fascians (Rhodococcus fascians) protein is Glycine dehydrogenase (decarboxylating).